Consider the following 700-residue polypeptide: Calpain-2 catalytic subunit (700 aa).

A2 bears the N-acetylalanine mark. Residues 2–19 (AGIAAKLAKDREAAEGLG) constitute a propeptide, anchors to the small subunit. Positions 45–344 (LFQDPSFPAL…YSRLEICNLT (300 aa)) constitute a Calpain catalytic domain. 2 residues coordinate Ca(2+): G91 and D96. The active site involves C105. Residues E175, Q229, and K230 each contribute to the Ca(2+) site. Catalysis depends on residues H262 and N286. Ca(2+) is bound by residues E292, D299, and E323. A domain III region spans residues 345–514 (PDTLTSDSYK…KKADYQVVDD (170 aa)). The tract at residues 515–529 (EIEANIDEIDISEDD) is linker. The segment at 530–700 (IDDGFRRLFA…LISWLSFSVL (171 aa)) is domain IV. A542, D545, E547, E552, D585, D587, S589, K591, E596, D615, D617, S619, T621, E626, D658, and N661 together coordinate Ca(2+). EF-hand domains lie at 572–597 (FSIETCKIMVDMLDSDGSGKLGLKEF), 602–637 (TKIQKYQKIYREIDVDRSGTMNSYEMRKALEEAGFK), and 652–672 (DDDLIIDFDNFVRCLIRLETL).

Belongs to the peptidase C2 family. In terms of assembly, forms a heterodimer with a small (regulatory) subunit (CAPNS1). Interacts with CPEB3; this leads to cleavage of CPEB3. It depends on Ca(2+) as a cofactor. As to expression, ubiquitous.

It localises to the cytoplasm. It is found in the cell membrane. It carries out the reaction Broad endopeptidase specificity.. With respect to regulation, activated by 200-1000 micromolar concentrations of calcium and inhibited by calpastatin. In terms of biological role, calcium-regulated non-lysosomal thiol-protease which catalyzes limited proteolysis of substrates involved in cytoskeletal remodeling and signal transduction. Proteolytically cleaves MYOC at 'Arg-226'. Proteolytically cleaves CPEB3 following neuronal stimulation which abolishes CPEB3 translational repressor activity, leading to translation of CPEB3 target mRNAs. The polypeptide is Calpain-2 catalytic subunit (CAPN2) (Bos taurus (Bovine)).